Reading from the N-terminus, the 340-residue chain is Probable dual-specificity RNA methyltransferase RlmN (340 aa).

Glutamate 91 serves as the catalytic Proton acceptor. The Radical SAM core domain occupies 97–326; that stretch reads HSGRVTACIS…CEIRKEKGTD (230 aa). Residues cysteine 104 and cysteine 331 are joined by a disulfide bond. [4Fe-4S] cluster contacts are provided by cysteine 111, cysteine 115, and cysteine 118. Residues 158–159, serine 190, 213–215, and asparagine 289 each bind S-adenosyl-L-methionine; these read GE and SLH. Cysteine 331 serves as the catalytic S-methylcysteine intermediate.

It belongs to the radical SAM superfamily. RlmN family. It depends on [4Fe-4S] cluster as a cofactor.

Its subcellular location is the cytoplasm. The catalysed reaction is adenosine(2503) in 23S rRNA + 2 reduced [2Fe-2S]-[ferredoxin] + 2 S-adenosyl-L-methionine = 2-methyladenosine(2503) in 23S rRNA + 5'-deoxyadenosine + L-methionine + 2 oxidized [2Fe-2S]-[ferredoxin] + S-adenosyl-L-homocysteine. The enzyme catalyses adenosine(37) in tRNA + 2 reduced [2Fe-2S]-[ferredoxin] + 2 S-adenosyl-L-methionine = 2-methyladenosine(37) in tRNA + 5'-deoxyadenosine + L-methionine + 2 oxidized [2Fe-2S]-[ferredoxin] + S-adenosyl-L-homocysteine. In terms of biological role, specifically methylates position 2 of adenine 2503 in 23S rRNA and position 2 of adenine 37 in tRNAs. The sequence is that of Probable dual-specificity RNA methyltransferase RlmN from Thermosipho melanesiensis (strain DSM 12029 / CIP 104789 / BI429).